Reading from the N-terminus, the 492-residue chain is Chitooligosaccharide oxidase (492 aa).

An N-terminal signal peptide occupies residues 1–19 (MHFNTLTCVLVGLVAHTSA). Positions 57-229 (LPFEPAAIAV…VELEFQTFAA (173 aa)) constitute an FAD-binding PCMH-type domain. The 6-(S-cysteinyl)-8alpha-(pros-histidyl)-FAD (His-Cys) cross-link spans 94 to 154 (HSYTSLGFGG…GKRALAHGTC (61 aa)).

This sequence belongs to the oxygen-dependent FAD-linked oxidoreductase family. FAD serves as cofactor. Post-translationally, the FAD cofactor is bound via a bicovalent 6-S-cysteinyl, 8alpha-N1-histidyl FAD linkage.

It is found in the secreted. The enzyme catalyses N,N'-diacetylchitobiose + O2 = N,N'-diacetylchitobiono-1,5-lactone + H2O2. The catalysed reaction is N,N',N''-triacetylchitotriose + O2 = N,N',N''-triacetylchitotriono-1,5-lactone + H2O2. It carries out the reaction N,N',N'',N'''-tetraacetylchitotetraose + O2 = N,N',N'',N'''-tetraacetylchitotetraono-1,5-lactone + H2O2. Functionally, catalyzes the selective oxidation of C1 hydroxyl moieties on chitooligosaccharides with concomitant reduction of molecular oxygen to hydrogen peroxide. This results in the formation of the corresponding lactones, which typically undergo spontaneous hydrolysis. Chitooligosaccharides are homo- or heterooligomers of N-acetylglucosamine (GlcNAc) and D-glucosamine which are linked through beta-1,4-glycosidic bonds. For optimal substrate binding at least 2 GlcNAc units are needed, and chitooligosaccharide oxidase is most efficient on chitobiose, chitotriose and chitotetraose. This is Chitooligosaccharide oxidase from Gibberella zeae (strain ATCC MYA-4620 / CBS 123657 / FGSC 9075 / NRRL 31084 / PH-1) (Wheat head blight fungus).